A 504-amino-acid chain; its full sequence is Ent-kaurene oxidase-like 3 (504 aa).

The chain crosses the membrane as a helical span at residues 3 to 23; sequence SLLAAGAGGIGVAAAAVGGFI. Cys-448 contributes to the heme binding site.

This sequence belongs to the cytochrome P450 family. Heme is required as a cofactor. In terms of tissue distribution, expressed in leaf blades.

The protein localises to the membrane. In terms of biological role, may hydroxylate diterpenes. This Oryza sativa subsp. japonica (Rice) protein is Ent-kaurene oxidase-like 3.